A 233-amino-acid chain; its full sequence is MASLDRVKVLVLGDSGVGKSSLVHLLCQNQVLGNPSWTVGCSVDVRVHDYREGTPEEKAFYIELWDVGGSVGSASSVKSTRAVFYNSVNGIILVHDLTNKKSSQNLYRWSLEALSKDSSPTGIIVSNGDYDREQFAENAVPLLLIGTKFDQIPENKRNDVLTRTAFLSEDFNAEEINLDCTNPRYLAAGSSNAVKLSRFFDKVIEKRYFTRDPSQMQSFTDRRRFNFKSLHSD.

The interval 1-233 (MASLDRVKVL…RFNFKSLHSD (233 aa)) is small GTPase-like. Residues 16-21 (GVGKSS), 148-150 (KFD), and 179-180 (DC) each bind GTP.

It belongs to the small GTPase superfamily. Rab family. As to quaternary structure, homodimer.

Functionally, required for KRAS signaling regulation and modulation of cell proliferation. Regulator of KRAS prenylation, and probably prenylation of other small GTPases. Required for lymphocyte development and function. Not required for myeloid cell development. The sequence is that of Rab-like protein 3 (rabl3) from Danio rerio (Zebrafish).